Here is a 286-residue protein sequence, read N- to C-terminus: Shikimate dehydrogenase (NADP(+)) (286 aa).

Residues 19 to 21 (SLS) and Thr-66 each bind shikimate. Lys-70 (proton acceptor) is an active-site residue. Residues Asn-91 and Asp-107 each coordinate shikimate. Residues 129-133 (GSGGA) and Leu-229 contribute to the NADP(+) site. Tyr-231 provides a ligand contact to shikimate. Gly-252 contacts NADP(+).

Belongs to the shikimate dehydrogenase family. As to quaternary structure, homodimer.

It catalyses the reaction shikimate + NADP(+) = 3-dehydroshikimate + NADPH + H(+). It functions in the pathway metabolic intermediate biosynthesis; chorismate biosynthesis; chorismate from D-erythrose 4-phosphate and phosphoenolpyruvate: step 4/7. In terms of biological role, involved in the biosynthesis of the chorismate, which leads to the biosynthesis of aromatic amino acids. Catalyzes the reversible NADPH linked reduction of 3-dehydroshikimate (DHSA) to yield shikimate (SA). In Prochlorococcus marinus (strain MIT 9312), this protein is Shikimate dehydrogenase (NADP(+)).